We begin with the raw amino-acid sequence, 186 residues long: Adenylate kinase (186 aa).

11 to 16 (GAGKGT) is a binding site for ATP. The interval 31 to 60 (STGDILRAAVKNGTAMGIEAKKYMDAGDLV) is NMP. Residues Thr32, Arg37, 58–60 (DLV), 86–89 (GFPR), and Gln93 each bind AMP. Residues 127-137 (GRAIKEGRSDD) form an LID region. ATP is bound at residue Arg128. Arg134 and Arg145 together coordinate AMP. Gly173 is an ATP binding site.

It belongs to the adenylate kinase family. As to quaternary structure, monomer.

The protein localises to the cytoplasm. It carries out the reaction AMP + ATP = 2 ADP. It participates in purine metabolism; AMP biosynthesis via salvage pathway; AMP from ADP: step 1/1. In terms of biological role, catalyzes the reversible transfer of the terminal phosphate group between ATP and AMP. Plays an important role in cellular energy homeostasis and in adenine nucleotide metabolism. This is Adenylate kinase from Leptospira biflexa serovar Patoc (strain Patoc 1 / Ames).